We begin with the raw amino-acid sequence, 172 residues long: Adenine phosphoribosyltransferase (172 aa).

Belongs to the purine/pyrimidine phosphoribosyltransferase family. Homodimer.

Its subcellular location is the cytoplasm. It carries out the reaction AMP + diphosphate = 5-phospho-alpha-D-ribose 1-diphosphate + adenine. It participates in purine metabolism; AMP biosynthesis via salvage pathway; AMP from adenine: step 1/1. Its function is as follows. Catalyzes a salvage reaction resulting in the formation of AMP, that is energically less costly than de novo synthesis. The chain is Adenine phosphoribosyltransferase from Streptococcus mutans serotype c (strain ATCC 700610 / UA159).